A 229-amino-acid polypeptide reads, in one-letter code: Uracil-DNA glycosylase (229 aa).

The active-site Proton acceptor is the Asp-67.

It belongs to the uracil-DNA glycosylase (UDG) superfamily. UNG family.

The protein localises to the cytoplasm. The catalysed reaction is Hydrolyzes single-stranded DNA or mismatched double-stranded DNA and polynucleotides, releasing free uracil.. In terms of biological role, excises uracil residues from the DNA which can arise as a result of misincorporation of dUMP residues by DNA polymerase or due to deamination of cytosine. This chain is Uracil-DNA glycosylase, found in Coxiella burnetii (strain RSA 493 / Nine Mile phase I).